We begin with the raw amino-acid sequence, 451 residues long: Phosphoglucosamine mutase (451 aa).

The active-site Phosphoserine intermediate is Ser107. Mg(2+) contacts are provided by Ser107, Asp246, Asp248, and Asp250. Residue Ser107 is modified to Phosphoserine.

The protein belongs to the phosphohexose mutase family. It depends on Mg(2+) as a cofactor. In terms of processing, activated by phosphorylation.

The enzyme catalyses alpha-D-glucosamine 1-phosphate = D-glucosamine 6-phosphate. Its function is as follows. Catalyzes the conversion of glucosamine-6-phosphate to glucosamine-1-phosphate. This chain is Phosphoglucosamine mutase, found in Burkholderia cenocepacia (strain HI2424).